We begin with the raw amino-acid sequence, 366 residues long: tRNA(Met) cytidine acetate ligase (366 aa).

ATP-binding positions include 7–20 (VAEF…HKYL), G96, N152, and R175.

Belongs to the TmcAL family.

The protein resides in the cytoplasm. It carries out the reaction cytidine(34) in elongator tRNA(Met) + acetate + ATP = N(4)-acetylcytidine(34) in elongator tRNA(Met) + AMP + diphosphate. Catalyzes the formation of N(4)-acetylcytidine (ac(4)C) at the wobble position of elongator tRNA(Met), using acetate and ATP as substrates. First activates an acetate ion to form acetyladenylate (Ac-AMP) and then transfers the acetyl group to tRNA to form ac(4)C34. This chain is tRNA(Met) cytidine acetate ligase, found in Streptococcus uberis (strain ATCC BAA-854 / 0140J).